The sequence spans 130 residues: Small ribosomal subunit protein uS11 (130 aa).

It belongs to the universal ribosomal protein uS11 family. In terms of assembly, part of the 30S ribosomal subunit. Interacts with proteins S7 and S18. Binds to IF-3.

In terms of biological role, located on the platform of the 30S subunit, it bridges several disparate RNA helices of the 16S rRNA. Forms part of the Shine-Dalgarno cleft in the 70S ribosome. The chain is Small ribosomal subunit protein uS11 from Xanthomonas campestris pv. campestris (strain B100).